A 233-amino-acid chain; its full sequence is Pyridoxal 5'-phosphate synthase subunit PdxT (233 aa).

Residue 61 to 63 (GES) coordinates L-glutamine. Cys-93 (nucleophile) is an active-site residue. L-glutamine-binding positions include Arg-127 and 163 to 164 (IR). Catalysis depends on charge relay system residues His-212 and Glu-214.

It belongs to the glutaminase PdxT/SNO family. In terms of assembly, in the presence of PdxS, forms a dodecamer of heterodimers. Only shows activity in the heterodimer.

It carries out the reaction aldehydo-D-ribose 5-phosphate + D-glyceraldehyde 3-phosphate + L-glutamine = pyridoxal 5'-phosphate + L-glutamate + phosphate + 3 H2O + H(+). It catalyses the reaction L-glutamine + H2O = L-glutamate + NH4(+). The protein operates within cofactor biosynthesis; pyridoxal 5'-phosphate biosynthesis. Catalyzes the hydrolysis of glutamine to glutamate and ammonia as part of the biosynthesis of pyridoxal 5'-phosphate. The resulting ammonia molecule is channeled to the active site of PdxS. The sequence is that of Pyridoxal 5'-phosphate synthase subunit PdxT from Paenarthrobacter aurescens (strain TC1).